Reading from the N-terminus, the 185-residue chain is Adenine phosphoribosyltransferase (185 aa).

Belongs to the purine/pyrimidine phosphoribosyltransferase family. Homodimer.

Its subcellular location is the cytoplasm. The catalysed reaction is AMP + diphosphate = 5-phospho-alpha-D-ribose 1-diphosphate + adenine. The protein operates within purine metabolism; AMP biosynthesis via salvage pathway; AMP from adenine: step 1/1. In terms of biological role, catalyzes a salvage reaction resulting in the formation of AMP, that is energically less costly than de novo synthesis. In Arthrobacter sp. (strain FB24), this protein is Adenine phosphoribosyltransferase.